The sequence spans 74 residues: Delta-stichotoxin-Sgt2a (74 aa).

Positions M1–A19 are cleaved as a signal peptide. Positions E20 to A28 are excised as a propeptide. Cystine bridges form between C34-C71, C36-C64, and C57-C72.

Belongs to the sea anemone sodium channel inhibitory toxin family. Type I subfamily.

It localises to the secreted. It is found in the nematocyst. Binds specifically to voltage-gated sodium channels (Nav), thereby delaying their inactivation during signal transduction. The sequence is that of Delta-stichotoxin-Sgt2a from Stichodactyla gigantea (Giant carpet anemone).